The sequence spans 236 residues: Small ribosomal subunit protein uS2c (236 aa).

This sequence belongs to the universal ribosomal protein uS2 family.

It is found in the plastid. The protein resides in the chloroplast. The polypeptide is Small ribosomal subunit protein uS2c (rps2) (Populus alba (White poplar)).